The following is a 64-amino-acid chain: Large ribosomal subunit protein bL35 (64 aa).

The span at 1–44 (MSKIKSHSGAAKRFKRTANGFKHKQSHTSHILTKKSTKRKRHLR) shows a compositional bias: basic residues. The disordered stretch occupies residues 1–48 (MSKIKSHSGAAKRFKRTANGFKHKQSHTSHILTKKSTKRKRHLRSMNQ).

Belongs to the bacterial ribosomal protein bL35 family.

The chain is Large ribosomal subunit protein bL35 from Marinomonas sp. (strain MWYL1).